We begin with the raw amino-acid sequence, 156 residues long: MTQSQVTPNAREALTETIVDAKVRKNLTFEAINEGTGLSLAYTTAALLGQHALPEKAAKLVAERLGLDDDAVRLLQTIPVRGSIPGGVPTDPTVYRFYEMVQVYGSTLKALVHEKFGDGIISAINFKLDIQKVPDPEGGERAVITLNGKYLPTKPF.

Active-site residues include Arg-96, Glu-99, and Ser-122.

It belongs to the cyanase family.

The catalysed reaction is cyanate + hydrogencarbonate + 3 H(+) = NH4(+) + 2 CO2. Catalyzes the reaction of cyanate with bicarbonate to produce ammonia and carbon dioxide. The protein is Cyanate hydratase of Burkholderia ambifaria (strain MC40-6).